The following is a 253-amino-acid chain: 5-oxoprolinase subunit A (253 aa).

It belongs to the LamB/PxpA family. In terms of assembly, forms a complex composed of PxpA, PxpB and PxpC.

The catalysed reaction is 5-oxo-L-proline + ATP + 2 H2O = L-glutamate + ADP + phosphate + H(+). Functionally, catalyzes the cleavage of 5-oxoproline to form L-glutamate coupled to the hydrolysis of ATP to ADP and inorganic phosphate. This chain is 5-oxoprolinase subunit A, found in Ruegeria pomeroyi (strain ATCC 700808 / DSM 15171 / DSS-3) (Silicibacter pomeroyi).